The sequence spans 387 residues: Lipid-A-disaccharide synthase (387 aa).

The protein belongs to the LpxB family.

It carries out the reaction a lipid X + a UDP-2-N,3-O-bis[(3R)-3-hydroxyacyl]-alpha-D-glucosamine = a lipid A disaccharide + UDP + H(+). The protein operates within bacterial outer membrane biogenesis; LPS lipid A biosynthesis. Its function is as follows. Condensation of UDP-2,3-diacylglucosamine and 2,3-diacylglucosamine-1-phosphate to form lipid A disaccharide, a precursor of lipid A, a phosphorylated glycolipid that anchors the lipopolysaccharide to the outer membrane of the cell. This Glaesserella parasuis serovar 5 (strain SH0165) (Haemophilus parasuis) protein is Lipid-A-disaccharide synthase.